The chain runs to 67 residues: Large ribosomal subunit protein uL29 (67 aa).

Belongs to the universal ribosomal protein uL29 family.

The polypeptide is Large ribosomal subunit protein uL29 (Zymomonas mobilis subsp. mobilis (strain ATCC 31821 / ZM4 / CP4)).